The chain runs to 212 residues: Urease accessory protein UreG 2 (212 aa).

Position 11–18 (11–18 (GPVGSGKM)) interacts with GTP.

The protein belongs to the SIMIBI class G3E GTPase family. UreG subfamily. In terms of assembly, homodimer. UreD, UreF and UreG form a complex that acts as a GTP-hydrolysis-dependent molecular chaperone, activating the urease apoprotein by helping to assemble the nickel containing metallocenter of UreC. The UreE protein probably delivers the nickel.

It localises to the cytoplasm. Facilitates the functional incorporation of the urease nickel metallocenter. This process requires GTP hydrolysis, probably effectuated by UreG. Functionally, disrupting the ure2 operon has no effect on urease activity, or pathogen survival in BALB/c mice when inoculated by gavage, but confers slightly enhanced resistance to low pH killing in vitro. This is Urease accessory protein UreG 2 from Brucella suis biovar 1 (strain 1330).